A 65-amino-acid chain; its full sequence is Large ribosomal subunit protein bL35 (65 aa).

This sequence belongs to the bacterial ribosomal protein bL35 family.

This is Large ribosomal subunit protein bL35 from Chlorobium phaeovibrioides (strain DSM 265 / 1930) (Prosthecochloris vibrioformis (strain DSM 265)).